The sequence spans 250 residues: MRKKIVVGNWKMNKNVAEGVALASSILENLDGGKMACEVGIAPAYPVLSEVGRVIEGSDICLVAQNCHYEDEGAYTGEVSVRMLDSLGCSYIIVGHSERRQYFGETNRTVNLRLKKALEGGMRVILCIGETLEEREAGVTDAIVTAQVREGLADIEDLGNVVLAYEPVWAIGTGKTATPEQADAVHASIRATISDMYGEADAEDIRIQYGGSVKPSNAVELFGMPNIDGGLIGGASLKADDFVAIVNAAG.

Asn-9–Lys-11 lines the substrate pocket. His-96 (electrophile) is an active-site residue. Glu-166 functions as the Proton acceptor in the catalytic mechanism. Substrate contacts are provided by residues Gly-172, Ser-212, and Gly-233 to Gly-234.

This sequence belongs to the triosephosphate isomerase family. In terms of assembly, homodimer.

The protein resides in the cytoplasm. The catalysed reaction is D-glyceraldehyde 3-phosphate = dihydroxyacetone phosphate. It participates in carbohydrate biosynthesis; gluconeogenesis. Its pathway is carbohydrate degradation; glycolysis; D-glyceraldehyde 3-phosphate from glycerone phosphate: step 1/1. Its function is as follows. Involved in the gluconeogenesis. Catalyzes stereospecifically the conversion of dihydroxyacetone phosphate (DHAP) to D-glyceraldehyde-3-phosphate (G3P). The sequence is that of Triosephosphate isomerase from Chlorobium phaeobacteroides (strain BS1).